The chain runs to 869 residues: Rho GTPase-activating protein 27 (869 aa).

An SH3 domain is found at 6–69 (EGDVYVLVEH…PAQYVRELPA (64 aa)). A disordered region spans residues 104 to 137 (GADGSSAEPRGRASSLCGPARQRTSGQRNSLAPG). Residues Ser-155, Ser-215, and Ser-249 each carry the phosphoserine modification. 2 WW domains span residues 246 to 280 (PRLS…SPFE) and 299 to 333 (ESLE…DETE). Disordered stretches follow at residues 275 to 299 (WESP…GSGE), 331 to 389 (ETEE…DLGP), and 447 to 474 (VPVP…PEEK). Acidic residues predominate over residues 331 to 343 (ETEELEDDPEEQL). Positions 345 to 356 (MQPSLSPRSPGQ) are enriched in polar residues. The residue at position 350 (Ser-350) is a Phosphoserine. In terms of domain architecture, WW 3 spans 414-447 (QFTQEQWVRLEDQEGKPYFYNPEDSSVQWELPQV). Phosphoserine is present on residues Ser-459 and Ser-462. Thr-464 carries the post-translational modification Phosphothreonine. A Phosphoserine modification is found at Ser-469. The region spanning 477–593 (TLDKAGVLHR…WHKAIAEGIE (117 aa)) is the PH domain. The segment at 598–644 (DLPQREEGEPSSADFGSSERLGSWKEEDVRPNAASPSLNPGSQESDL) is disordered. Over residues 631–642 (ASPSLNPGSQES) the composition is skewed to polar residues. A Phosphoserine modification is found at Ser-632. Residues 677 to 866 (CALAQLCERE…LILHQCADIF (190 aa)) form the Rho-GAP domain.

Interacts with SH3KBP1/CIN85.

The protein localises to the cytoplasm. The protein resides in the membrane. Its function is as follows. Rho GTPase-activating protein which may be involved in clathrin-mediated endocytosis. GTPase activators for the Rho-type GTPases act by converting them to an inactive GDP-bound state. Has activity toward CDC42 and RAC1. This Rattus norvegicus (Rat) protein is Rho GTPase-activating protein 27 (Arhgap27).